A 115-amino-acid polypeptide reads, in one-letter code: Aspartate 1-decarboxylase (115 aa).

S24 serves as the catalytic Schiff-base intermediate with substrate; via pyruvic acid. S24 carries the post-translational modification Pyruvic acid (Ser). T56 contacts substrate. The active-site Proton donor is Y57. 72-74 serves as a coordination point for substrate; that stretch reads GAA.

Belongs to the PanD family. In terms of assembly, heterooctamer of four alpha and four beta subunits. The cofactor is pyruvate. Post-translationally, is synthesized initially as an inactive proenzyme, which is activated by self-cleavage at a specific serine bond to produce a beta-subunit with a hydroxyl group at its C-terminus and an alpha-subunit with a pyruvoyl group at its N-terminus.

The protein resides in the cytoplasm. It carries out the reaction L-aspartate + H(+) = beta-alanine + CO2. It functions in the pathway cofactor biosynthesis; (R)-pantothenate biosynthesis; beta-alanine from L-aspartate: step 1/1. Its function is as follows. Catalyzes the pyruvoyl-dependent decarboxylation of aspartate to produce beta-alanine. This Pseudothermotoga lettingae (strain ATCC BAA-301 / DSM 14385 / NBRC 107922 / TMO) (Thermotoga lettingae) protein is Aspartate 1-decarboxylase.